Reading from the N-terminus, the 376-residue chain is Non-structural protein NS2 (376 aa).

A compositionally biased stretch (basic and acidic residues) spans 163-188; that stretch reads EEREKGAVEQPHKPAFKTERGMNRPD. The tract at residues 163–201 is disordered; the sequence is EEREKGAVEQPHKPAFKTERGMNRPDSDEDQNPAGGVVN.

This sequence belongs to the orbivirus non-structural protein NS2 family.

Functionally, single-stranded RNA-binding protein. This chain is Non-structural protein NS2 (Segment-8), found in Antilocapra americana (Pronghorn).